Here is a 55-residue protein sequence, read N- to C-terminus: Neurotoxin B-IV (55 aa).

Pro10 carries the post-translational modification Hydroxyproline. Intrachain disulfides connect Cys12–Cys52, Cys16–Cys48, Cys23–Cys41, and Cys26–Cys37.

It belongs to the worm B-toxin family.

The protein localises to the secreted. In terms of biological role, this toxin increases the excitability of nerves by delaying the inactivation of the voltage-gated sodium channel (Nav). Only acts on some crustacean. Is more abundant, but 15-fold less toxic than neurotoxin B-II. The sequence is that of Neurotoxin B-IV from Cerebratulus lacteus (Milky ribbon worm).